The chain runs to 141 residues: Hemoglobin subunit alpha-3 (141 aa).

One can recognise a Globin domain in the interval 1–141 (VLSPADKTNV…VSTVLTSKYR (141 aa)). Histidine 58 lines the O2 pocket. Histidine 87 is a binding site for heme b.

It belongs to the globin family. In terms of assembly, heterotetramer of two alpha chains and two beta chains. Red blood cells.

Involved in oxygen transport from the lung to the various peripheral tissues. The polypeptide is Hemoglobin subunit alpha-3 (Gorilla gorilla gorilla (Western lowland gorilla)).